A 301-amino-acid polypeptide reads, in one-letter code: Thymidylate synthase (301 aa).

DUMP is bound by residues Arg-38 and 163 to 164 (RR). Cys-183 functions as the Nucleophile in the catalytic mechanism. Residues 203–206 (RSGD), Asn-214, and 244–246 (HIY) each bind dUMP. Position 206 (Asp-206) interacts with (6R)-5,10-methylene-5,6,7,8-tetrahydrofolate. Position 300 (Ala-300) interacts with (6R)-5,10-methylene-5,6,7,8-tetrahydrofolate.

The protein belongs to the thymidylate synthase family. As to quaternary structure, homodimer.

It catalyses the reaction dUMP + (6R)-5,10-methylene-5,6,7,8-tetrahydrofolate = 7,8-dihydrofolate + dTMP. The protein operates within pyrimidine metabolism; dTTP biosynthesis. In terms of biological role, catalyzes the reductive methylation of deoxyuridylate to thymidylate. The sequence is that of Thymidylate synthase from Varicella-zoster virus (strain Dumas) (HHV-3).